Consider the following 385-residue polypeptide: ELAV-like protein 4 (385 aa).

Residues threonine 12 to aspartate 48 are disordered. A compositionally biased stretch (low complexity) spans serine 18–asparagine 33. The span at arginine 34 to aspartate 48 shows a compositional bias: polar residues. Serine 38 bears the Phosphoserine mark. 2 consecutive RRM domains span residues threonine 51–proline 129 and alanine 137–asparagine 217. Serine 233 is modified (phosphoserine). Residue arginine 248 is modified to Asymmetric dimethylarginine; by CARM1; alternate. The residue at position 248 (arginine 248) is an Omega-N-methylarginine; by CARM1; alternate. Residues tryptophan 302–asparagine 380 form the RRM 3 domain.

The protein belongs to the RRM elav family. As to quaternary structure, component of a TAU mRNP complex, at least composed of IGF2BP1, ELAVL4 and G3BP. Associates with the EIF4F cap-binding complex, composed of EIF4G, EIF4A, EIF4E and PABP. Within the EIF4F cap-binding complex, interacts with EIF4A. Interacts with SMN (via Tudor domain) in an RNA-independent manner; the interaction is required for localization of ELAVL4 to RNA granules. Interacts with MAP1 light chain LC1 (via C-terminus); the interaction contributes to the association of ELAVL4 with microtubules. Interacts with MAP1 light chain LC2. Post-translationally, methylated by CARM1, which leads to reduced RNA-binding activity and enhanced interaction with SMN. Methylation at Arg-248 by CARM1 weakens protective binding to the 3'UTR of CDKN1A mRNA and down-regulates CDKN1A protein expression, thereby maintaining cells in a proliferative state. Methylation is inhibited by NGF, which facilitates neurite outgrowth. As to expression, expressed in pancreatic beta cells (at protein level). Expressed in the brain.

The protein localises to the cytoplasm. It localises to the perikaryon. The protein resides in the cell projection. Its subcellular location is the dendrite. It is found in the axon. The protein localises to the growth cone. Its function is as follows. RNA-binding protein that is involved in the post-transcriptional regulation of mRNAs. Plays a role in the regulation of mRNA stability, alternative splicing and translation. Binds to AU-rich element (ARE) sequences in the 3' untranslated region (UTR) of target mRNAs, including GAP43, VEGF, FOS, CDKN1A and ACHE mRNA. Many of the target mRNAs are coding for RNA-binding proteins, transcription factors and proteins involved in RNA processing and/or neuronal development and function. By binding to the mRNA 3'UTR, decreases mRNA deadenylation and thereby contributes to the stabilization of mRNA molecules and their protection from decay. Also binds to the polyadenylated (poly(A)) tail in the 3'UTR of mRNA, thereby increasing its affinity for mRNA binding. Mainly plays a role in neuron-specific RNA processing by stabilization of mRNAs such as GAP43, ACHE and mRNAs of other neuronal proteins, thereby contributing to the differentiation of neural progenitor cells, nervous system development, learning and memory mechanisms. Involved in the negative regulation of the proliferative activity of neuronal stem cells and in the positive regulation of neuronal differentiation of neural progenitor cells. Promotes neuronal differentiation of neural stem/progenitor cells in the adult subventricular zone of the hippocampus by binding to and stabilizing SATB1 mRNA. Binds and stabilizes MSI1 mRNA in neural stem cells. Exhibits increased binding to ACHE mRNA during neuronal differentiation, thereby stabilizing ACHE mRNA and enhancing its expression. Protects CDKN1A mRNA from decay by binding to its 3'-UTR. May bind to APP and BACE1 mRNAS and the BACE1AS lncRNA and enhance their stabilization. Plays a role in neurite outgrowth and in the establishment and maturation of dendritic arbors, thereby contributing to neocortical and hippocampal circuitry function. Stabilizes GAP43 mRNA and protects it from decay during postembryonic development in the brain. By promoting the stabilization of GAP43 mRNA, plays a role in NGF-mediated neurite outgrowth. Binds to BDNF long 3'UTR mRNA, thereby leading to its stabilization and increased dendritic translation after activation of PKC. By increasing translation of BDNF after nerve injury, may contribute to nerve regeneration. Acts as a stabilizing factor by binding to the 3'UTR of NOVA1 mRNA, thereby increasing its translation and enhancing its functional activity in neuron-specific splicing. Stimulates translation of mRNA in a poly(A)- and cap-dependent manner, possibly by associating with the EIF4F cap-binding complex. May also negatively regulate translation by binding to the 5'UTR of Ins2 mRNA, thereby repressing its translation. Upon glucose stimulation, Ins2 mRNA is released from ELAVL4 and translational inhibition is abolished. Also plays a role in the regulation of alternative splicing. May regulate alternative splicing of CALCA pre-mRNA into Calcitonin and Calcitonin gene-related peptide 1 (CGRP) by competing with splicing regulator TIAR for binding to U-rich intronic sequences of CALCA pre-mRNA. This Homo sapiens (Human) protein is ELAV-like protein 4 (ELAVL4).